The sequence spans 287 residues: Probable WRKY transcription factor 57 (287 aa).

The span at 86 to 99 (TSTNNNPSATSSSS) shows a compositional bias: low complexity. The disordered stretch occupies residues 86–137 (TSTNNNPSATSSSSEDPAENSTASAEKTPPPETPVKEKKKAQKRIRQPRFAF). Positions 122–132 (EKKKAQKRIRQ) are enriched in basic residues. Positions 141-206 (SDVDNLEDGY…YEGQHCHQTI (66 aa)) form a DNA-binding region, WRKY. A disordered region spans residues 248–287 (DNNAPSPRLPRPTTEDTPAVSTPSEEGLLGDIVPQTMRNP). Polar residues predominate over residues 262–271 (EDTPAVSTPS).

It belongs to the WRKY group II-c family.

The protein resides in the nucleus. Transcription factor. Interacts specifically with the W box (5'-(T)TGAC[CT]-3'), a frequently occurring elicitor-responsive cis-acting element. The polypeptide is Probable WRKY transcription factor 57 (WRKY57) (Arabidopsis thaliana (Mouse-ear cress)).